A 396-amino-acid chain; its full sequence is Elongation factor Tu (396 aa).

The tr-type G domain maps to 10–206 (KPHVNVGTIG…VLDTYIPEPE (197 aa)). A G1 region spans residues 19 to 26 (GHVDHGKT). GTP is bound at residue 19–26 (GHVDHGKT). A Mg(2+)-binding site is contributed by Thr26. The G2 stretch occupies residues 60 to 64 (GITIN). Positions 81–84 (DCPG) are G3. Residues 81–85 (DCPGH) and 136–139 (NKCD) each bind GTP. The interval 136–139 (NKCD) is G4. The G5 stretch occupies residues 174 to 176 (SAT).

Belongs to the TRAFAC class translation factor GTPase superfamily. Classic translation factor GTPase family. EF-Tu/EF-1A subfamily. As to quaternary structure, monomer.

It localises to the cytoplasm. It catalyses the reaction GTP + H2O = GDP + phosphate + H(+). In terms of biological role, GTP hydrolase that promotes the GTP-dependent binding of aminoacyl-tRNA to the A-site of ribosomes during protein biosynthesis. The protein is Elongation factor Tu of Psychrobacter cryohalolentis (strain ATCC BAA-1226 / DSM 17306 / VKM B-2378 / K5).